Consider the following 374-residue polypeptide: DNA replication and repair protein RecF (374 aa).

An ATP-binding site is contributed by 34-41 (GDNGAGKT).

Belongs to the RecF family.

The protein resides in the cytoplasm. Its function is as follows. The RecF protein is involved in DNA metabolism; it is required for DNA replication and normal SOS inducibility. RecF binds preferentially to single-stranded, linear DNA. It also seems to bind ATP. This Rhizobium etli (strain ATCC 51251 / DSM 11541 / JCM 21823 / NBRC 15573 / CFN 42) protein is DNA replication and repair protein RecF.